The chain runs to 352 residues: tRNA pseudouridine synthase D (352 aa).

Asp-81 functions as the Nucleophile in the catalytic mechanism. One can recognise a TRUD domain in the interval 157–303 (GIPNYFGAQR…MEHERRILRL (147 aa)).

Belongs to the pseudouridine synthase TruD family.

The enzyme catalyses uridine(13) in tRNA = pseudouridine(13) in tRNA. Responsible for synthesis of pseudouridine from uracil-13 in transfer RNAs. This is tRNA pseudouridine synthase D from Pseudomonas syringae pv. syringae (strain B728a).